A 133-amino-acid polypeptide reads, in one-letter code: Small ribosomal subunit protein uS8 (133 aa).

Belongs to the universal ribosomal protein uS8 family. Part of the 30S ribosomal subunit. Contacts proteins S5 and S12.

One of the primary rRNA binding proteins, it binds directly to 16S rRNA central domain where it helps coordinate assembly of the platform of the 30S subunit. This is Small ribosomal subunit protein uS8 from Chloroflexus aggregans (strain MD-66 / DSM 9485).